Consider the following 595-residue polypeptide: Laccase-18 (595 aa).

A signal peptide spans 1-29; it reads MEKLSTAASLFCVVVAATALAMAVVGGEA. 2 consecutive Plastocyanin-like domains span residues 37-153 and 162-316; these read MVHE…PRNG and KDVP…YAGA. 2 N-linked (GlcNAc...) asparagine glycosylation sites follow: Asn42 and Asn48. The Cu cation site is built by His87 and His89. N-linked (GlcNAc...) asparagine glycosylation occurs at Asn121. 2 residues coordinate Cu cation: His132 and His134. N-linked (GlcNAc...) asparagine glycans are attached at residues Asn206, Asn345, Asn382, Asn402, Asn409, Asn439, and Asn470. Positions 429 to 571 constitute a Plastocyanin-like 3 domain; sequence DFPVRPPRPF…ATAFIVEDGP (143 aa). 8 residues coordinate Cu cation: Asn488, His491, His493, His550, Cys551, His552, His556, and Met561. The interval 570–595 is disordered; that stretch reads GPTPETSLPPPPPEFKRCGTNGLSQP.

Belongs to the multicopper oxidase family. Cu cation serves as cofactor.

It localises to the secreted. The protein resides in the extracellular space. Its subcellular location is the apoplast. The catalysed reaction is 4 hydroquinone + O2 = 4 benzosemiquinone + 2 H2O. Functionally, lignin degradation and detoxification of lignin-derived products. This chain is Laccase-18 (LAC18), found in Oryza sativa subsp. japonica (Rice).